A 258-amino-acid chain; its full sequence is UPF0246 protein LHK_02295 (258 aa).

The protein belongs to the UPF0246 family.

The protein is UPF0246 protein LHK_02295 of Laribacter hongkongensis (strain HLHK9).